The sequence spans 174 residues: MAVLDIVTYPNKVLKQISKPVERFDKDLHKLLDDMYETMIKNNGVGLAAIQVAVPIRALLIDIGDEEGKQSKDTLIEVINPEFLTWDGTQKDTEGCLSVPDYFDEVERYKNVKVKFFDRFGKEHVMEAEGLLSVAFQHETDHLDGHLFVERLDYIKRKKFEKEWKKLLKQKRKK.

2 residues coordinate Fe cation: Cys96 and His138. The active site involves Glu139. A Fe cation-binding site is contributed by His142.

Belongs to the polypeptide deformylase family. Fe(2+) is required as a cofactor.

The enzyme catalyses N-terminal N-formyl-L-methionyl-[peptide] + H2O = N-terminal L-methionyl-[peptide] + formate. Its function is as follows. Removes the formyl group from the N-terminal Met of newly synthesized proteins. Requires at least a dipeptide for an efficient rate of reaction. N-terminal L-methionine is a prerequisite for activity but the enzyme has broad specificity at other positions. In Nautilia profundicola (strain ATCC BAA-1463 / DSM 18972 / AmH), this protein is Peptide deformylase.